Here is a 429-residue protein sequence, read N- to C-terminus: MDRIHITGGAPLNGVIPISGAKNAALPLMIASLLTGETLELINVPRLADIAALTRILGNHGVDHMVVGKRPGQTTETGQTIRLTASNVIDTTAPYELVSTMRASFWVVAPLLARFGEAKVSLPGGCAIGTRPVDLLIMALERLGAEIEIDAGYVVARTKNGLRGAEIAFPKVTVGGTHVALMAAALAYGTTVLENAAREPEVVDLAECLNKMGAKIRGAGTPRIEIEGVARLNGARHEVLPDRIETGTYAMAVAMAGGDVVLKDTRADLLHSALDVLSTTGAEITQVEGGIRVRRNGGGIAAVDITTDPFPGFPTDLQAQFMALMTLAKGQSHIRETIFENRFMHVQELARLGAKIRLEGDLAIVEGVDRLKGAPVMATDLRASVSLVIAGLAAEGETQINRVYHLDRGFEALEAKLGRCGAQIERVRA.

Position 22 to 23 (22 to 23) interacts with phosphoenolpyruvate; the sequence is KN. Residue Arg-102 coordinates UDP-N-acetyl-alpha-D-glucosamine. Residue Cys-126 is the Proton donor of the active site. Cys-126 bears the 2-(S-cysteinyl)pyruvic acid O-phosphothioketal mark. UDP-N-acetyl-alpha-D-glucosamine-binding positions include 131–135, Asp-316, and Ile-338; that span reads RPVDL.

It belongs to the EPSP synthase family. MurA subfamily.

It localises to the cytoplasm. The enzyme catalyses phosphoenolpyruvate + UDP-N-acetyl-alpha-D-glucosamine = UDP-N-acetyl-3-O-(1-carboxyvinyl)-alpha-D-glucosamine + phosphate. It functions in the pathway cell wall biogenesis; peptidoglycan biosynthesis. Its function is as follows. Cell wall formation. Adds enolpyruvyl to UDP-N-acetylglucosamine. In Methylobacterium radiotolerans (strain ATCC 27329 / DSM 1819 / JCM 2831 / NBRC 15690 / NCIMB 10815 / 0-1), this protein is UDP-N-acetylglucosamine 1-carboxyvinyltransferase.